The sequence spans 363 residues: Inactive CLIP domain-containing serine protease A8 (363 aa).

The N-terminal stretch at 1–25 is a signal peptide; it reads MPSWWCCCCLVVLLYAQRMIVPSSA. Positions 33–82 constitute a Clip domain; that stretch reads LQECPGGFCSPKYLCPNGTYNEANAQNQEIIMLRFGEEDVCQDYMQVCCS. Intrachain disulfides connect cysteine 36–cysteine 80, cysteine 41–cysteine 73, and cysteine 47–cysteine 81. Asparagine 49, asparagine 83, asparagine 117, and asparagine 166 each carry an N-linked (GlcNAc...) asparagine glycan. Residues 114-360 enclose the Peptidase S1 domain; it reads VEGNRTYAQY…FVTWINATIE (247 aa). Intrachain disulfides connect cysteine 245–cysteine 317, cysteine 276–cysteine 297, and cysteine 307–cysteine 336. Asparagine 319 and asparagine 356 each carry an N-linked (GlcNAc...) asparagine glycan.

This sequence belongs to the peptidase S1 family. CLIP subfamily. As to quaternary structure, heterodimer of a light chain and a heavy chain; disulfide-linked. Post-translationally, secreted as a full-length protein. Proteolytically cleaved into two chains which remain covalently linked. Cleavage is induced by Gram-positive or Gram-negative bacteria infection.

Its subcellular location is the secreted. Its function is as follows. Inactive serine protease which plays an essential role in the innate immune response against bacteria, fungi and protozoa infection by activating the melanization cascade. In the melanization cascade, acts downstream of TEP1 and SPCLIP1 to promote CLIPA28 and CLIPC9 proteolytic cleavage and CLIPC9 recruitment to microbial surfaces. In the resistant strain L3-5, required for the melanization of killed parasite P.berghei ookinetes which results in their clearance. In the susceptible strain G3, appears to be dispensable for ookinete elimination which occurs by lysis. Required for the melanization of Gram-positive and Gram-negative bacteria. During the late stage of fungus B.bassiana-mediated infection, required for the initiation of hyphae melanization by promoting prophenoloxidase PPO activation. The polypeptide is Inactive CLIP domain-containing serine protease A8 (Anopheles gambiae (African malaria mosquito)).